A 300-amino-acid polypeptide reads, in one-letter code: 33 kDa chaperonin (300 aa).

Disulfide bonds link cysteine 235–cysteine 237 and cysteine 269–cysteine 272.

This sequence belongs to the HSP33 family. Under oxidizing conditions two disulfide bonds are formed involving the reactive cysteines. Under reducing conditions zinc is bound to the reactive cysteines and the protein is inactive.

Its subcellular location is the cytoplasm. Redox regulated molecular chaperone. Protects both thermally unfolding and oxidatively damaged proteins from irreversible aggregation. Plays an important role in the bacterial defense system toward oxidative stress. The chain is 33 kDa chaperonin from Pseudomonas syringae pv. syringae (strain B728a).